A 284-amino-acid chain; its full sequence is Small ribosomal subunit protein uS2 (284 aa).

A compositionally biased stretch (low complexity) spans 250–272; it reads QELLAGATASPTAAGAAPGTPEA. Residues 250 to 284 are disordered; it reads QELLAGATASPTAAGAAPGTPEADIQTEPTAPQNP.

This sequence belongs to the universal ribosomal protein uS2 family.

The protein is Small ribosomal subunit protein uS2 of Mycobacterium sp. (strain KMS).